The primary structure comprises 291 residues: Bifunctional protein FolD (291 aa).

NADP(+)-binding positions include 167 to 169 (GRS) and S192.

The protein belongs to the tetrahydrofolate dehydrogenase/cyclohydrolase family. Homodimer.

The enzyme catalyses (6R)-5,10-methylene-5,6,7,8-tetrahydrofolate + NADP(+) = (6R)-5,10-methenyltetrahydrofolate + NADPH. It catalyses the reaction (6R)-5,10-methenyltetrahydrofolate + H2O = (6R)-10-formyltetrahydrofolate + H(+). It functions in the pathway one-carbon metabolism; tetrahydrofolate interconversion. Catalyzes the oxidation of 5,10-methylenetetrahydrofolate to 5,10-methenyltetrahydrofolate and then the hydrolysis of 5,10-methenyltetrahydrofolate to 10-formyltetrahydrofolate. The chain is Bifunctional protein FolD from Leptospira biflexa serovar Patoc (strain Patoc 1 / Ames).